We begin with the raw amino-acid sequence, 317 residues long: Gluconeogenesis factor (317 aa).

This sequence belongs to the gluconeogenesis factor family.

It localises to the cytoplasm. Required for morphogenesis under gluconeogenic growth conditions. Required, in gluconeogenic growth conditions, for the correct localization of PBP1 and hence for displaying a normal rod shape. In Bacillus subtilis (strain 168), this protein is Gluconeogenesis factor (mgfK).